The primary structure comprises 418 residues: Thyroxine-binding globulin (418 aa).

Residues 1 to 20 (MSVFFYLFVLVFGLQATIHC) form the signal peptide. N-linked (GlcNAc...) asparagine glycosylation is found at N24, N39, N102, N168, N227, and N256. Residues N296 and K401 each contribute to the thyroxine site.

The protein belongs to the serpin family.

It is found in the secreted. Its function is as follows. Major thyroid hormone transport protein in serum. The protein is Thyroxine-binding globulin (Serpina7) of Mus musculus (Mouse).